The following is a 260-amino-acid chain: Winged helix repair factor 1 (260 aa).

3 winged helix domain regions span residues 38 to 110, 126 to 185, and 186 to 260; these read FTED…MVVM, SRAT…LAVP, and GAGR…ISET.

Belongs to the STK19 family. As to quaternary structure, monomer in solution. Homodimer; when bound to DNA. Component of a transcription-coupled nucleotide excision repair (TC-NER) complex which assembles and interacts with the multiprotein RNA polymerase II complex when it stalls at DNA lesions.

The protein localises to the nucleus. Its function is as follows. DNA-binding protein which is required for efficient transcription-coupled nucleotide excision repair (TC-NER). Acts as part of a TC-NER complex which assembles and interacts with RNA polymerase II (RNAPII) when it stalls at DNA lesions. The chain is Winged helix repair factor 1 from Xenopus laevis (African clawed frog).